The primary structure comprises 89 residues: Small ribosomal subunit protein uS15 (89 aa).

Belongs to the universal ribosomal protein uS15 family. As to quaternary structure, part of the 30S ribosomal subunit. Forms a bridge to the 50S subunit in the 70S ribosome, contacting the 23S rRNA.

In terms of biological role, one of the primary rRNA binding proteins, it binds directly to 16S rRNA where it helps nucleate assembly of the platform of the 30S subunit by binding and bridging several RNA helices of the 16S rRNA. Forms an intersubunit bridge (bridge B4) with the 23S rRNA of the 50S subunit in the ribosome. The chain is Small ribosomal subunit protein uS15 from Thermosynechococcus vestitus (strain NIES-2133 / IAM M-273 / BP-1).